The following is a 797-amino-acid chain: Sodium/hydrogen exchanger 4 (797 aa).

The Cytoplasmic segment spans residues 1-13 (MGPAMFMAFRLWN). An intramembrane region (name=A/M1) is located at residues 14-28 (WLLLLAVLTRSEATS). Residues 29–69 (YVNESSNPTAQQAPDARFAASSSDPDEGISVFELDYDYVQI) lie on the Cytoplasmic side of the membrane. The tract at residues 32-52 (ESSNPTAQQAPDARFAASSSD) is disordered. Residues 70 to 90 (PYEVTLWILLASLAKIGFHLY) constitute an intramembrane region (name=B/M2). Residues 91-94 (HRLP) lie on the Cytoplasmic side of the membrane. The chain crosses the membrane as a helical span at residues 95–114 (HLMPESCLLIIVGALVGGII). The Extracellular portion of the chain corresponds to 115–127 (FGTHHKSPPVMDS). Residues 128–148 (SIYFLYLLPPIVLESGYFMPT) form a helical membrane-spanning segment. The Cytoplasmic segment spans residues 149–154 (RPFFEN). The helical transmembrane segment at 155-175 (IGSILWWAGLGALINAFGIGL) threads the bilayer. Residues 176 to 194 (SLYFICQIKAFGLGDINLL) are Extracellular-facing. Residues 195–215 (HNLLFGSLISAVDPVAVLAVF) traverse the membrane as a helical segment. Topologically, residues 216–226 (EEARVNEQLYM) are cytoplasmic. Residues 227–247 (MIFGEALLNDGISVVLYNILI) form a helical membrane-spanning segment. Residues 248 to 270 (AFTKMHKFEDIEAVDILAGCARF) are Extracellular-facing. A helical membrane pass occupies residues 271 to 291 (VIVGCGGVFFGIIFGFISAFI). At 292-304 (TRFTQNISAIEPL) the chain is on the cytoplasmic side. A helical transmembrane segment spans residues 305–325 (IVFMFSYLSYLAAETLYLSGI). The Extracellular segment spans residues 326–352 (LAITACAVTMKKYVEENVSQTSYTTIK). N-linked (GlcNAc...) asparagine glycosylation occurs at Asn342. The helical transmembrane segment at 353 to 373 (YFMKMLSSVSETLIFIFMGVS) threads the bilayer. Topologically, residues 374–384 (TIGKNHEWNWA) are cytoplasmic. Residues 385–405 (FICFTLLFCQIWRAISVFTLF) traverse the membrane as a helical segment. At 406–420 (YVSNQFRTFPFSIKD) the chain is on the extracellular side. The name=L intramembrane region spans 421–441 (QFIIFYSGVRGAGSFSLAFLL). The Extracellular portion of the chain corresponds to 442 to 450 (PLSLFPRKK). The helical transmembrane segment at 451 to 471 (LFVTATLVVTYFTVFFQGITI) threads the bilayer. The Cytoplasmic segment spans residues 472–797 (GPLVRYLDVR…KSHSPLLHRK (326 aa)). The segment covering 759-769 (YDSGEQTEEET) has biased composition (acidic residues). The segment at 759–797 (YDSGEQTEEETSAILSRWTAEHRHSTEHHKSHSPLLHRK) is disordered. Over residues 783–797 (STEHHKSHSPLLHRK) the composition is skewed to basic residues.

Belongs to the monovalent cation:proton antiporter 1 (CPA1) transporter (TC 2.A.36) family. As to quaternary structure, homodimer; each protomer has one site for sodium and one site for proton binding. Interacts with CHP1 and CHP2. In terms of processing, may be phosphorylated. In terms of tissue distribution, expressed in kidney. Expressed in uterus and endometrial epithelial cells. Expressed in the inner segments of inner medullary collecting ducts (IMCD) in kidney. Expressed in AGTR1-positive neurons in organum vasculosum of the lamina terminalis (at protein level).

The protein resides in the basolateral cell membrane. Its subcellular location is the apical cell membrane. It is found in the zymogen granule membrane. It catalyses the reaction Na(+)(in) + H(+)(out) = Na(+)(out) + H(+)(in). It carries out the reaction Na(+)(out) + NH4(+)(in) = Na(+)(in) + NH4(+)(out). Up-regulated in response to high extracellular sodium concentration. Its function is as follows. Electroneutral antiporter that exchanges sodium for protons or ammonium ions at the basolateral membrane of epithelia to regulate cell volume and intracellular pH upon hypertonic conditions. As part of transcellular ammonia transport in renal tubules, mediates basolateral ammonium extrusion in the medullary thick ascending limb, regulating the corticopapillary ammonium gradient and overall renal acid excretion. Mediates sodium:proton exchange in gastric parietal cells secondary to cAMP-dependent acid secretion and hyperosmolarity. Possibly coupled to chloride:bicarbonate antiporter, enables loading of parietal cells with sodium and chloride ions to maintain cell volume and normal gastric acid secretion. Functions as a sodium sensor in neurons of organum vasculosum of the lamina terminalis where it regulates water intake in response to increased sodium concentration in body fluids. The sequence is that of Sodium/hydrogen exchanger 4 (Slc9a4) from Mus musculus (Mouse).